The following is a 919-amino-acid chain: Probable dipeptidyl-aminopeptidase B (919 aa).

The segment covering 1–10 (MRRSDGHEET) has biased composition (basic and acidic residues). The interval 1 to 53 (MRRSDGHEETSEFLPMTHSRSVSAASQTSTDSSLSTESLFPREQKPFPNAMGG) is disordered. Residues 1 to 92 (MRRSDGHEET…AATGGGRARR (92 aa)) are Cytoplasmic-facing. Low complexity predominate over residues 21 to 38 (SVSAASQTSTDSSLSTES). The helical; Signal-anchor for type II membrane protein transmembrane segment at 93-113 (IFWILVLLCLGGWLLAFVLFL) threads the bilayer. Topologically, residues 114–919 (TGGRANYQTA…MKRSLRLLSP (806 aa)) are vacuolar. 3 N-linked (GlcNAc...) asparagine glycosylation sites follow: Asn200, Asn352, and Asn643. Ser757 serves as the catalytic Charge relay system. A glycan (N-linked (GlcNAc...) asparagine) is linked at Asn811. Catalysis depends on charge relay system residues Asp834 and His867.

This sequence belongs to the peptidase S9B family.

It localises to the vacuole membrane. It carries out the reaction Release of an N-terminal dipeptide, Xaa-Yaa-|-Zaa-, from a polypeptide, preferentially when Yaa is Pro, provided Zaa is neither Pro nor hydroxyproline.. Its function is as follows. Type IV dipeptidyl-peptidase which removes N-terminal dipeptides sequentially from polypeptides having unsubstituted N-termini provided that the penultimate residue is proline. This Aspergillus fumigatus (strain CBS 144.89 / FGSC A1163 / CEA10) (Neosartorya fumigata) protein is Probable dipeptidyl-aminopeptidase B (dapB).